Consider the following 313-residue polypeptide: Methionyl-tRNA formyltransferase (313 aa).

110-113 (SLLP) contacts (6S)-5,6,7,8-tetrahydrofolate.

The protein belongs to the Fmt family.

It catalyses the reaction L-methionyl-tRNA(fMet) + (6R)-10-formyltetrahydrofolate = N-formyl-L-methionyl-tRNA(fMet) + (6S)-5,6,7,8-tetrahydrofolate + H(+). In terms of biological role, attaches a formyl group to the free amino group of methionyl-tRNA(fMet). The formyl group appears to play a dual role in the initiator identity of N-formylmethionyl-tRNA by promoting its recognition by IF2 and preventing the misappropriation of this tRNA by the elongation apparatus. The sequence is that of Methionyl-tRNA formyltransferase from Enterococcus faecalis (strain ATCC 700802 / V583).